The sequence spans 480 residues: Ammonium transporter 3 member 3 (480 aa).

11 helical membrane-spanning segments follow: residues Ser-31 to Val-51, Ser-59 to Tyr-79, Met-135 to Leu-155, Leu-169 to Phe-189, Gly-198 to Gly-218, Ile-233 to Gly-253, Ala-265 to Phe-287, Ser-292 to Val-314, Ala-318 to Leu-337, Gly-361 to Leu-381, and Leu-407 to Ile-427.

This sequence belongs to the ammonia transporter channel (TC 1.A.11.2) family.

The protein localises to the membrane. Functionally, involved in ammonium transport. This Oryza sativa subsp. japonica (Rice) protein is Ammonium transporter 3 member 3 (AMT3-3).